We begin with the raw amino-acid sequence, 180 residues long: MDQKPLGLLTIHVKRGINLAIRDHRSSDPYIVLNVADQTLKTRVVKKNCNPVWNEEMTVAIKDPNVPIRLTVFDWDKFTGDDKMGDANIDIQPYLEALKMGMELLRLPNGCAIKRVQPSRHNCLSDESSIVWNNGKITQDLILRLNNVECGEIEIMLEWHEGAGCRGITSSSKGGGSSST.

Residues 1 to 105 (MDQKPLGLLT…EALKMGMELL (105 aa)) enclose the C2 domain. Residues Arg-22, Asp-23, Asp-28, Asp-74, Trp-75, Asp-76, and Asp-82 each contribute to the Ca(2+) site.

This sequence belongs to the plant CAR protein family. In terms of assembly, binds to PYR/PYL/RCAR abscisic acid intracellular receptors in an ABA-independent manner, both at the plasma membrane and in the nucleus.

It is found in the cell membrane. It localises to the nucleus. In terms of biological role, stimulates the GTPase/ATPase activities of Obg-like ATPases. Mediates the transient calcium-dependent interaction of PYR/PYL/RCAR abscisic acid (ABA) receptors with the plasma membrane and thus regulates ABA sensitivity. This Arabidopsis thaliana (Mouse-ear cress) protein is Protein C2-DOMAIN ABA-RELATED 10.